A 276-amino-acid chain; its full sequence is Rhomboid protease GlpG (276 aa).

The next 6 helical transmembrane spans lie at 94–114 (GPVT…MQIL), 142–162 (ALMH…WYLG), 169–189 (LGSG…GYVQ), 192–212 (FSGP…GYVW), 229–249 (LIIF…GMSM), and 250–270 (ANGA…VDSL). S201 serves as the catalytic Nucleophile. H254 is an active-site residue.

It belongs to the peptidase S54 family.

It is found in the cell inner membrane. It catalyses the reaction Cleaves type-1 transmembrane domains using a catalytic dyad composed of serine and histidine that are contributed by different transmembrane domains.. In terms of biological role, rhomboid-type serine protease that catalyzes intramembrane proteolysis. This Escherichia coli (strain 55989 / EAEC) protein is Rhomboid protease GlpG.